A 604-amino-acid chain; its full sequence is Serine/threonine-protein kinase A-Raf (604 aa).

The 73-residue stretch at 19–91 (GTVKVYLPNK…DGEELIVEVL (73 aa)) folds into the RBD domain. Residues 98 to 144 (MHNFVRKTFFSLAFCDFCLKFLFHGFRCQTCGYKFHQHCSSKVPTVC) form a Phorbol-ester/DAG-type zinc finger. Histidine 99, cysteine 112, cysteine 115, cysteine 125, cysteine 128, histidine 133, cysteine 136, and cysteine 144 together coordinate Zn(2+). Phosphoserine is present on residues serine 157 and serine 162. 2 disordered regions span residues 177-222 (NELL…HMVS) and 241-288 (TDAA…EKKK). Threonine 181 is modified (phosphothreonine). Serine 186 is modified (phosphoserine). Over residues 210 to 222 (IRSTSTPNVHMVS) the composition is skewed to polar residues. The span at 252–265 (PRGSPSPASVSSGR) shows a compositional bias: low complexity. Residues serine 255 and serine 267 each carry the phosphoserine modification. Residues 272–287 (LPSEQRERKSLADEKK) are compositionally biased toward basic and acidic residues. A Protein kinase domain is found at 308 to 568 (VQLLKRIGTG…PQILATIELL (261 aa)). ATP contacts are provided by residues 314-322 (IGTGSFGTV) and lysine 334. At threonine 316 the chain carries Phosphothreonine. The active-site Proton acceptor is aspartate 427.

The protein belongs to the protein kinase superfamily. TKL Ser/Thr protein kinase family. RAF subfamily. In terms of assembly, interacts with TH1L/NELFD. Zn(2+) serves as cofactor. In terms of processing, dephosphorylation by the SHOC2-MRAS-PP1c (SMP) complex consisting of SHOC2, GTP-bound M-Ras/MRAS and the catalytic subunit of protein phosphatase 1 (PPP1CA, PPP1CB or PPP1CC); this relieves inactivation and stimulates kinase activity.

The enzyme catalyses L-seryl-[protein] + ATP = O-phospho-L-seryl-[protein] + ADP + H(+). It carries out the reaction L-threonyl-[protein] + ATP = O-phospho-L-threonyl-[protein] + ADP + H(+). Functionally, involved in the transduction of mitogenic signals from the cell membrane to the nucleus. May also regulate the TOR signaling cascade. Phosphorylates PFKFB2. The sequence is that of Serine/threonine-protein kinase A-Raf (Araf) from Mus musculus (Mouse).